Reading from the N-terminus, the 244-residue chain is ATP synthase subunit a (244 aa).

The next 5 membrane-spanning stretches (helical) occupy residues 17–37, 75–95, 112–132, 170–190, and 221–241; these read LTNILMITVASVIVLLIAILT, FLALGVTLLMYIFVSNMLGLP, DPAITLTLAVMVVALTHYYGV, LYGNIFAGEILLGLLAGLATS, and GAIQAFIFTMLTMVYMSHKIS.

It belongs to the ATPase A chain family. F-type ATPases have 2 components, CF(1) - the catalytic core - and CF(0) - the membrane proton channel. CF(1) has five subunits: alpha(3), beta(3), gamma(1), delta(1), epsilon(1). CF(0) has three main subunits: a(1), b(2) and c(9-12). The alpha and beta chains form an alternating ring which encloses part of the gamma chain. CF(1) is attached to CF(0) by a central stalk formed by the gamma and epsilon chains, while a peripheral stalk is formed by the delta and b chains. The F(1)F(0) complex interacts with SpoIIIJ and YqjG; YqgA is found in the same complex.

The protein localises to the cell membrane. Its function is as follows. Key component of the proton channel; it plays a direct role in the translocation of protons across the membrane. The sequence is that of ATP synthase subunit a from Bacillus subtilis (strain 168).